A 311-amino-acid polypeptide reads, in one-letter code: Serpentine receptor class gamma-6 (311 aa).

The next 7 helical transmembrane spans lie at 24–44, 58–78, 101–121, 148–168, 200–220, 235–255, and 266–286; these read MGQL…IYVI, FWLL…FDIF, PLLI…KMVA, LTAC…NILI, YMQI…AILW, IWFA…YLHM, and IFML…VIMI.

This sequence belongs to the nematode receptor-like protein srg family.

It is found in the membrane. The sequence is that of Serpentine receptor class gamma-6 (srg-6) from Caenorhabditis elegans.